The following is a 637-amino-acid chain: Phospholipase B (637 aa).

Positions 1-19 (MSIITTAFALSLLATTAFA) are cleaved as a signal peptide. The 527-residue stretch at 46–572 (DCPSNVTWIR…DTWCWAGDDN (527 aa)) folds into the PLA2c domain. N-linked (GlcNAc...) asparagine glycosylation is found at N50, N56, N122, N231, N246, N272, N314, N343, N387, N433, N481, N501, N528, N553, N572, N594, and N606.

It belongs to the lysophospholipase family. N-glycosylated.

Its subcellular location is the secreted. It carries out the reaction a 1-acyl-sn-glycero-3-phosphocholine + H2O = sn-glycerol 3-phosphocholine + a fatty acid + H(+). Functionally, exhibits phospholipase B (PLB), lysophospholipase (LPL) and lysophospholipase/transacylase (LPTA) activities. This chain is Phospholipase B (PLB1), found in Cryptococcus neoformans var. neoformans serotype D (strain B-3501A) (Filobasidiella neoformans).